The following is a 348-amino-acid chain: L-asparaginase 2 (348 aa).

A signal peptide spans 1–22; the sequence is MEFFKKTALAALVMGFSGAALA. Residues 24–348 form the Asparaginase/glutaminase domain; the sequence is PNITILATGG…QQIQQIFNQY (325 aa). Thr34 functions as the O-isoaspartyl threonine intermediate in the catalytic mechanism. Residues 80–81 and 111–112 contribute to the substrate site; these read SQ and TD. Cys99 and Cys127 are joined by a disulfide.

The protein belongs to the asparaginase 1 family. Homotetramer.

The protein localises to the periplasm. The catalysed reaction is L-asparagine + H2O = L-aspartate + NH4(+). The protein is L-asparaginase 2 (ansB) of Escherichia coli (strain K12).